Consider the following 166-residue polypeptide: Small ribosomal subunit protein uS5 (166 aa).

An S5 DRBM domain is found at 11–74; the sequence is LQEKLIAVNR…EKARRNMMNV (64 aa).

This sequence belongs to the universal ribosomal protein uS5 family. As to quaternary structure, part of the 30S ribosomal subunit. Contacts proteins S4 and S8.

Its function is as follows. With S4 and S12 plays an important role in translational accuracy. Located at the back of the 30S subunit body where it stabilizes the conformation of the head with respect to the body. The sequence is that of Small ribosomal subunit protein uS5 from Buchnera aphidicola subsp. Acyrthosiphon kondoi (Acyrthosiphon kondoi symbiotic bacterium).